A 306-amino-acid polypeptide reads, in one-letter code: 2-phospho-L-lactate transferase (306 aa).

Position 48 (aspartate 48) interacts with 7,8-didemethyl-8-hydroxy-5-deazariboflavin.

It belongs to the CofD family. As to quaternary structure, homodimer. It depends on Mg(2+) as a cofactor.

The enzyme catalyses (2S)-lactyl-2-diphospho-5'-guanosine + 7,8-didemethyl-8-hydroxy-5-deazariboflavin = oxidized coenzyme F420-0 + GMP + H(+). It participates in cofactor biosynthesis; coenzyme F420 biosynthesis. Functionally, catalyzes the transfer of the 2-phospholactate moiety from (2S)-lactyl-2-diphospho-5'-guanosine to 7,8-didemethyl-8-hydroxy-5-deazariboflavin (FO) with the formation of oxidized coenzyme F420-0 and GMP. The polypeptide is 2-phospho-L-lactate transferase (Methanococcoides burtonii (strain DSM 6242 / NBRC 107633 / OCM 468 / ACE-M)).